The sequence spans 258 residues: Imidazole glycerol phosphate synthase subunit HisF (258 aa).

Catalysis depends on residues aspartate 11 and aspartate 130.

The protein belongs to the HisA/HisF family. Heterodimer of HisH and HisF.

It is found in the cytoplasm. The catalysed reaction is 5-[(5-phospho-1-deoxy-D-ribulos-1-ylimino)methylamino]-1-(5-phospho-beta-D-ribosyl)imidazole-4-carboxamide + L-glutamine = D-erythro-1-(imidazol-4-yl)glycerol 3-phosphate + 5-amino-1-(5-phospho-beta-D-ribosyl)imidazole-4-carboxamide + L-glutamate + H(+). It functions in the pathway amino-acid biosynthesis; L-histidine biosynthesis; L-histidine from 5-phospho-alpha-D-ribose 1-diphosphate: step 5/9. Functionally, IGPS catalyzes the conversion of PRFAR and glutamine to IGP, AICAR and glutamate. The HisF subunit catalyzes the cyclization activity that produces IGP and AICAR from PRFAR using the ammonia provided by the HisH subunit. The sequence is that of Imidazole glycerol phosphate synthase subunit HisF from Salmonella arizonae (strain ATCC BAA-731 / CDC346-86 / RSK2980).